The sequence spans 572 residues: Zyxin (572 aa).

A2 is modified (N-acetylalanine). Residues 23-351 form a disordered region; sequence QKKFGPVVAP…VRSPGAPGPL (329 aa). Pro residues-rich tracts occupy residues 63 to 78 and 93 to 108; these read IPPP…PPPL and FPPP…PPAP. Phosphoserine occurs at positions 116, 142, 143, 169, and 170. Over residues 143-156 the composition is skewed to low complexity; it reads SIDLEIDSLSSLLD. A Phosphothreonine modification is found at T179. The segment covering 202–239 has biased composition (low complexity); sequence SPSSSQPLPQVPAPAQSQTQFHVQPQPQPKPQVQLHVQ. Positions 240–252 are enriched in polar residues; sequence SQTQPVSLANTQP. R253 is modified (asymmetric dimethylarginine). The span at 253 to 265 shows a compositional bias: pro residues; sequence RGPPASSPAPAPK. S259 is subject to Phosphoserine. N6-acetyllysine is present on K265. S267 carries the phosphoserine modification. A Phosphothreonine modification is found at T270. K272 carries the N6-acetyllysine modification. T274 carries the post-translational modification Phosphothreonine. An N6-acetyllysine modification is found at K279. Phosphoserine occurs at positions 281, 288, and 308. Residues 305–318 show a composition bias toward polar residues; it reads GTGSPQPPSFTYAQ. Positions 319–330 are enriched in basic and acidic residues; that stretch reads QREKPRVQEKQH. S344 carries the post-translational modification Phosphoserine. LIM zinc-binding domains are found at residues 384–443, 444–503, and 504–570; these read CGRC…TLEK, CNTC…YAPR, and CSVC…TARA.

It belongs to the zyxin/ajuba family. Interacts with HPV type 6 protein E6. Does not interact significantly with E6 proteins from HPV types 11, 16, or 18. Interacts, via the Pro-rich regions, with the EVH1 domains of ENAH, EVL and VASP. Interacts with the first LIM domain of TES. Interacts with NEBL (isoform 2). Interacts with SYNPO2. As to quaternary structure, (Microbial infection) Interacts with human papillomavirus type 6/HPV6 protein E6. Does not interact significantly with E6 proteins from HPV types 11, 16, or 18.

It localises to the cytoplasm. The protein resides in the cytoskeleton. It is found in the nucleus. The protein localises to the cell junction. Its subcellular location is the focal adhesion. Adhesion plaque protein. Binds alpha-actinin and the CRP protein. Important for targeting TES and ENA/VASP family members to focal adhesions and for the formation of actin-rich structures. May be a component of a signal transduction pathway that mediates adhesion-stimulated changes in gene expression. This chain is Zyxin (ZYX), found in Homo sapiens (Human).